Here is a 266-residue protein sequence, read N- to C-terminus: 15-hydroxyprostaglandin dehydrogenase [NAD(+)] (266 aa).

NAD(+) contacts are provided by residues 12 to 20, 36 to 37, 63 to 65, and N91; these read GAAQGIGRA, DW, and CDV. Substrate-binding residues include S138 and Q148. The active-site Proton acceptor is Y151. NAD(+) contacts are provided by residues 151 to 155 and 186 to 188; these read YCASK and VDT.

It belongs to the short-chain dehydrogenases/reductases (SDR) family. Homodimer.

The protein resides in the cytoplasm. The catalysed reaction is prostaglandin E2 + NAD(+) = 15-oxoprostaglandin E2 + NADH + H(+). The enzyme catalyses (15S)-hydroxy-(5Z,8Z,11Z,13E)-eicosatetraenoate + NAD(+) = 15-oxo-(5Z,8Z,11Z,13E)-eicosatetraenoate + NADH + H(+). It carries out the reaction (11R)-hydroxy-(5Z,8Z,12E,14Z)-eicosatetraenoate + NAD(+) = 11-oxo-(5Z,8Z,12E,14Z)-eicosatetraenoate + NADH + H(+). It catalyses the reaction lipoxin A4 + NAD(+) = 15-oxo-(5S,6R)-dihydroxy-(7E,9E,11Z,13E)-eicosatetraenoate + NADH + H(+). The catalysed reaction is 15-oxo-(5S,6R)-dihydroxy-(7E,9E,11Z)-eicosatrienoate + NADH + H(+) = (5S,6R,15S)-trihydroxy-(7E,9E,11Z)-eicosatrienoate + NAD(+). The enzyme catalyses prostaglandin A1 + NAD(+) = 15-oxo-prostaglandin A1 + NADH + H(+). It carries out the reaction prostaglandin E1 + NAD(+) = 15-oxoprostaglandin E1 + NADH + H(+). It catalyses the reaction 14-hydroxy-(4Z,7Z,10Z,12E,16Z,19Z)-docosahexaenoate + NAD(+) = 14-oxo-(4Z,7Z,10Z,12E,16Z,19Z)-docosahexaenoate + NADH + H(+). The catalysed reaction is resolvin E1 + NAD(+) = 18-oxo-resolvin E1 + NADH + H(+). The enzyme catalyses resolvin D1 + NAD(+) = 8-oxoresolvin D1 + NADH + H(+). It carries out the reaction resolvin D1 + NAD(+) = 17-oxoresolvin D1 + NADH + H(+). It catalyses the reaction resolvin D2 + NAD(+) = 7-oxoresolvin D2 + NADH + H(+). The catalysed reaction is resolvin D2 + NAD(+) = 16-oxoresolvin D2 + NADH + H(+). Its function is as follows. Catalyzes the NAD-dependent dehydrogenation (oxidation) of a broad array of hydroxylated polyunsaturated fatty acids (mainly eicosanoids and docosanoids, including prostaglandins, lipoxins and resolvins), yielding their corresponding keto (oxo) metabolites. Decreases the levels of the pro-proliferative prostaglandins such as prostaglandin E2 (whose activity is increased in cancer because of an increase in the expression of cyclooxygenase 2) and generates oxo-fatty acid products that can profoundly influence cell function by abrogating pro-inflammatory cytokine expression. Converts resolvins E1, D1 and D2 to their oxo products, which represents a mode of resolvin inactivation. Resolvin E1 plays important roles during the resolution phase of acute inflammation, while resolvins D1 and D2 have a unique role in obesity-induced adipose inflammation. The protein is 15-hydroxyprostaglandin dehydrogenase [NAD(+)] (HPGD) of Bos taurus (Bovine).